Here is a 128-residue protein sequence, read N- to C-terminus: Methylglyoxal synthase (128 aa).

Positions 1–128 (MRIALIAHDR…MQDHPGNRQA (128 aa)) constitute an MGS-like domain. Substrate is bound by residues histidine 8, lysine 12, 34 to 37 (TGTT), and 54 to 55 (SG). Aspartate 60 serves as the catalytic Proton donor/acceptor. Substrate is bound at residue histidine 87.

It belongs to the methylglyoxal synthase family.

The enzyme catalyses dihydroxyacetone phosphate = methylglyoxal + phosphate. Catalyzes the formation of methylglyoxal from dihydroxyacetone phosphate. In Moorella thermoacetica (strain ATCC 39073 / JCM 9320), this protein is Methylglyoxal synthase.